Consider the following 133-residue polypeptide: ATP synthase epsilon chain, chloroplastic (133 aa).

This sequence belongs to the ATPase epsilon chain family. As to quaternary structure, F-type ATPases have 2 components, CF(1) - the catalytic core - and CF(0) - the membrane proton channel. CF(1) has five subunits: alpha(3), beta(3), gamma(1), delta(1), epsilon(1). CF(0) has three main subunits: a, b and c.

Its subcellular location is the plastid. It is found in the chloroplast thylakoid membrane. Functionally, produces ATP from ADP in the presence of a proton gradient across the membrane. In Vitis vinifera (Grape), this protein is ATP synthase epsilon chain, chloroplastic.